The chain runs to 128 residues: MPKSVIIPAGTSTPIAPFVPGTLADGVVYVSGTLPFDEFNNVVYPDDPKAQTRHVLETIRRVIETAGGTMEDVTFNSIFITDWKNYAAINEIYAEFFPGDKPARFCIQCGLVKPEALVEIASVAHIAK.

The protein belongs to the RutC family.

The catalysed reaction is (Z)-3-aminoacrylate + H2O + H(+) = 3-oxopropanoate + NH4(+). Functionally, involved in pyrimidine catabolism. Catalyzes the deamination of 3-aminoacrylate to malonic semialdehyde, a reaction that can also occur spontaneously. RutC may facilitate the reaction and modulate the metabolic fitness, rather than catalyzing essential functions. In Enterobacter sp. (strain 638), this protein is 3-aminoacrylate deaminase RutC.